Consider the following 776-residue polypeptide: Kinesin-like protein KLP1 (776 aa).

One can recognise a Kinesin motor domain in the interval Ala-5–Leu-335. Gly-91–Thr-98 is a binding site for ATP. Residues Ala-348–Leu-371 are a coiled coil. The disordered stretch occupies residues Arg-441–Ser-535. Low complexity predominate over residues Gly-447–Pro-460. Residues Ala-579–Glu-657 are a coiled coil. The globular stretch occupies residues Pro-658–Arg-776.

The protein belongs to the TRAFAC class myosin-kinesin ATPase superfamily. Kinesin family.

Its subcellular location is the cytoplasm. The protein localises to the cytoskeleton. The protein resides in the flagellum axoneme. In terms of biological role, may play a role in rotation or twisting of the central pair microtubules of the flagella axoneme. In Chlamydomonas reinhardtii (Chlamydomonas smithii), this protein is Kinesin-like protein KLP1 (KLP1).